The chain runs to 410 residues: MAREKFERKKPHVNIGTIGHVDHGKTTLTAAITMALAASTGAKGKRYDEIDAAPEERARGITINTAHVEYETEKRHYAHVDCPGHADYVKNMITGAAQMDGAILVVSGADGPMPQTKEHILLAKQVGVPNVVVFLNKEDQVDDAELLELVELEVRETLSDYDFPGDEVPVVAGSALLALESLTQNPKIVKGENKWVDKIYSLMDQVDAYIPTPERDTDKPFLMAVEDVFSITGRGTVATGRVERGTVKVGEAIEIVGLREAPVTSIVTGLEMFQKTLEESVAGDNVGILLRGIQKKDIERGMVLAKPGTIKPHKSFEAQVYILNKEEGGRHTPFFQGYRPQFYVRTTDVTGKIESFQADDGSETQMVMPGDRIKMVVQLIQPIAIEKGMRFAIREGGRTVGAGVVFNILE.

Residues 10-214 (KPHVNIGTIG…QVDAYIPTPE (205 aa)) enclose the tr-type G domain. Residues 19–26 (GHVDHGKT) are G1. 19–26 (GHVDHGKT) is a GTP binding site. Thr-26 is a binding site for Mg(2+). Residues 60–64 (GITIN) are G2. A G3 region spans residues 81-84 (DCPG). GTP is bound by residues 81-85 (DCPGH) and 136-139 (NKED). The segment at 136–139 (NKED) is G4. Residues 174–176 (SAL) form a G5 region.

The protein belongs to the TRAFAC class translation factor GTPase superfamily. Classic translation factor GTPase family. EF-Tu/EF-1A subfamily.

It is found in the plastid. The protein resides in the chloroplast. It carries out the reaction GTP + H2O = GDP + phosphate + H(+). Functionally, GTP hydrolase that promotes the GTP-dependent binding of aminoacyl-tRNA to the A-site of ribosomes during protein biosynthesis. The polypeptide is Elongation factor Tu, chloroplastic (tufA) (Chlorokybus atmophyticus (Soil alga)).